The following is a 412-amino-acid chain: uncharacterized protein (412 aa).

A run of 11 helical transmembrane segments spans residues 17 to 37, 54 to 74, 91 to 111, 112 to 132, 146 to 166, 173 to 193, 225 to 245, 257 to 277, 299 to 319, 346 to 366, and 375 to 395; these read LLLA…ELVI, VLAL…PLLV, MIFI…FFFL, GRAL…AVVG, LIVS…SFIG, WTFW…LLEM, VYIT…SFLG, TAAG…VITG, LLAC…SLFI, VMVF…ALMG, and AAVG…SVFA.

The protein belongs to the major facilitator superfamily.

The protein resides in the cell membrane. This is an uncharacterized protein from Bacillus subtilis (strain 168).